Reading from the N-terminus, the 145-residue chain is Ribonuclease P protein component (145 aa).

A disordered region spans residues 121 to 145 (PAAAGTMPPARTVHPSSLSPTEPEL). Polar residues predominate over residues 134 to 145 (HPSSLSPTEPEL).

This sequence belongs to the RnpA family. In terms of assembly, consists of a catalytic RNA component (M1 or rnpB) and a protein subunit.

It catalyses the reaction Endonucleolytic cleavage of RNA, removing 5'-extranucleotides from tRNA precursor.. In terms of biological role, RNaseP catalyzes the removal of the 5'-leader sequence from pre-tRNA to produce the mature 5'-terminus. It can also cleave other RNA substrates such as 4.5S RNA. The protein component plays an auxiliary but essential role in vivo by binding to the 5'-leader sequence and broadening the substrate specificity of the ribozyme. The polypeptide is Ribonuclease P protein component (Xanthomonas axonopodis pv. citri (strain 306)).